We begin with the raw amino-acid sequence, 239 residues long: Ribosomal RNA small subunit methyltransferase G (239 aa).

S-adenosyl-L-methionine is bound by residues G77, F82, 128 to 129, and R147; that span reads AE.

Belongs to the methyltransferase superfamily. RNA methyltransferase RsmG family.

Its subcellular location is the cytoplasm. In terms of biological role, specifically methylates the N7 position of guanine in position 535 of 16S rRNA. The sequence is that of Ribosomal RNA small subunit methyltransferase G from Bacillus cereus (strain AH187).